The primary structure comprises 88 residues: Small ribosomal subunit protein uS15 (88 aa).

The protein belongs to the universal ribosomal protein uS15 family. In terms of assembly, part of the 30S ribosomal subunit. Forms a bridge to the 50S subunit in the 70S ribosome, contacting the 23S rRNA.

Its function is as follows. One of the primary rRNA binding proteins, it binds directly to 16S rRNA where it helps nucleate assembly of the platform of the 30S subunit by binding and bridging several RNA helices of the 16S rRNA. Forms an intersubunit bridge (bridge B4) with the 23S rRNA of the 50S subunit in the ribosome. This Pelobacter propionicus (strain DSM 2379 / NBRC 103807 / OttBd1) protein is Small ribosomal subunit protein uS15.